The sequence spans 265 residues: Type 1 encapsulin shell protein (265 aa).

This sequence belongs to the encapsulin family. Family 1 subfamily. Found in a complex with DyP, suggesting it is the native cargo protein. Monomers form pentamers, which assemble to form hollow shells composed of 60 subunits with several openings.

The protein resides in the encapsulin nanocompartment. It is found in the cell membrane. Its function is as follows. Shell component of a type 1 encapsulin nanocompartment. Assembles into proteinaceous shells 23-24 nm in diameter with 2-2.5 nm thick walls. Cargo protein DyP is targeted to the interior via its C-terminal extension; probably only 1 DyP hexamer is incorporated into each shell. Probably involved in protection against oxidative damage. The chain is Type 1 encapsulin shell protein from Mycolicibacterium paratuberculosis (strain ATCC BAA-968 / K-10) (Mycobacterium paratuberculosis).